A 526-amino-acid polypeptide reads, in one-letter code: Putative ankyrin repeat protein R840 (526 aa).

ANK repeat units follow at residues 78 to 107 (TLNE…NIRS), 108 to 137 (RDNF…DIRS), 139 to 167 (KNYA…NIRD), 169 to 197 (DNCA…DSTS), 198 to 227 (NFNE…RCRN), 229 to 255 (SAII…NIRI), 256 to 285 (DDDY…NIRS), 286 to 315 (EIDH…DIKS), 317 to 345 (YDRS…NIRN), 346 to 375 (INDY…NIRV), 376 to 405 (DNDS…DIRV), 406 to 435 (NNYQ…NVSI), 437 to 467 (NVPL…DINL), 468 to 497 (ADDM…NVRA), and 499 to 526 (NDYA…AILS).

The chain is Putative ankyrin repeat protein R840 from Acanthamoeba polyphaga (Amoeba).